We begin with the raw amino-acid sequence, 274 residues long: NADPH-dependent 7-cyano-7-deazaguanine reductase (274 aa).

80–82 (VES) lines the substrate pocket. 82–83 (SK) lines the NADPH pocket. The active-site Thioimide intermediate is cysteine 181. Catalysis depends on aspartate 188, which acts as the Proton donor. 220 to 221 (HE) contributes to the substrate binding site. Position 249–250 (249–250 (RG)) interacts with NADPH.

It belongs to the GTP cyclohydrolase I family. QueF type 2 subfamily. As to quaternary structure, homodimer.

The protein resides in the cytoplasm. The enzyme catalyses 7-aminomethyl-7-carbaguanine + 2 NADP(+) = 7-cyano-7-deazaguanine + 2 NADPH + 3 H(+). It functions in the pathway tRNA modification; tRNA-queuosine biosynthesis. Its function is as follows. Catalyzes the NADPH-dependent reduction of 7-cyano-7-deazaguanine (preQ0) to 7-aminomethyl-7-deazaguanine (preQ1). In Burkholderia pseudomallei (strain 1710b), this protein is NADPH-dependent 7-cyano-7-deazaguanine reductase.